The primary structure comprises 142 residues: Hemoglobin subunit alpha (142 aa).

Residues 2–142 (VLSPADKTNV…VSTVLTSKYR (141 aa)) enclose the Globin domain. At Ser-4 the chain carries Phosphoserine. Lys-8 carries the N6-succinyllysine modification. Thr-9 is subject to Phosphothreonine. Lys-12 bears the N6-succinyllysine mark. Residue Lys-17 is modified to N6-acetyllysine; alternate. Position 17 is an N6-succinyllysine; alternate (Lys-17). Tyr-25 is subject to Phosphotyrosine. A Phosphoserine modification is found at Ser-36. The residue at position 41 (Lys-41) is an N6-succinyllysine. At Ser-50 the chain carries Phosphoserine. Position 59 (His-59) interacts with O2. His-88 contacts heme b. Ser-103 carries the post-translational modification Phosphoserine. At Thr-109 the chain carries Phosphothreonine. 2 positions are modified to phosphoserine: Ser-125 and Ser-132. A phosphothreonine mark is found at Thr-135 and Thr-138. Ser-139 carries the post-translational modification Phosphoserine.

This sequence belongs to the globin family. As to quaternary structure, heterotetramer of two alpha chains and two beta chains. Red blood cells.

In terms of biological role, involved in oxygen transport from the lung to the various peripheral tissues. Hemopressin acts as an antagonist peptide of the cannabinoid receptor CNR1. Hemopressin-binding efficiently blocks cannabinoid receptor CNR1 and subsequent signaling. In Sapajus apella (Brown-capped capuchin), this protein is Hemoglobin subunit alpha (HBA).